Reading from the N-terminus, the 80-residue chain is CLAVATA3/ESR (CLE)-related protein 40 (80 aa).

An N-terminal signal peptide occupies residues 1–25 (MAAMKYKGSVFIILVILLLSSSLLA). The disordered stretch occupies residues 45-80 (MKKEKKIDGGTANEVEERQVPTGSDPLHHKHIPFTP). Hydroxyproline is present on Pro-65.

The protein belongs to the CLV3/ESR signal peptide family. As to expression, mostly expressed at low levels in stems and apex, and, to a lower extent, in roots, seedlings, leaves, flowers, siliques and pollen.

It is found in the secreted. It localises to the extracellular space. Extracellular signal peptide secreted by differentiated root cells that regulates root cell fate. Acts with ACR4 as a ligand-receptor pair in a signal transduction pathway, coordinating movement of the root tip and organization of cell divisions in the root meristem. Promotes cell differentiation in the distal root meristem in a dose-dependent manner, especially the transition from columella stem cells (CSC) daughters into columella cells (CCs). Induces ACR4 expression in root quiescent center (QC). Involved in WUX5 QC-specific expression pattern regulation. Regulates the transition of protophloem cells from proliferation to differentiation, thus impinging on postembryonic growth capacity of the root meristem; this signaling pathway requires CRN and CLV2. This chain is CLAVATA3/ESR (CLE)-related protein 40, found in Arabidopsis thaliana (Mouse-ear cress).